The chain runs to 393 residues: NAD(P)H-quinone oxidoreductase subunit H, chloroplastic (393 aa).

The protein belongs to the complex I 49 kDa subunit family. NDH is composed of at least 16 different subunits, 5 of which are encoded in the nucleus.

Its subcellular location is the plastid. The protein localises to the chloroplast thylakoid membrane. The catalysed reaction is a plastoquinone + NADH + (n+1) H(+)(in) = a plastoquinol + NAD(+) + n H(+)(out). The enzyme catalyses a plastoquinone + NADPH + (n+1) H(+)(in) = a plastoquinol + NADP(+) + n H(+)(out). Functionally, NDH shuttles electrons from NAD(P)H:plastoquinone, via FMN and iron-sulfur (Fe-S) centers, to quinones in the photosynthetic chain and possibly in a chloroplast respiratory chain. The immediate electron acceptor for the enzyme in this species is believed to be plastoquinone. Couples the redox reaction to proton translocation, and thus conserves the redox energy in a proton gradient. This is NAD(P)H-quinone oxidoreductase subunit H, chloroplastic from Sorghum bicolor (Sorghum).